We begin with the raw amino-acid sequence, 75 residues long: ATP synthase subunit c (75 aa).

Transmembrane regions (helical) follow at residues 13–33 (LSVIGYGIGTLGPGIGLGILF) and 55–75 (FIGLALVEVLALIGFVAALII).

This sequence belongs to the ATPase C chain family. F-type ATPases have 2 components, F(1) - the catalytic core - and F(0) - the membrane proton channel. F(1) has five subunits: alpha(3), beta(3), gamma(1), delta(1), epsilon(1). F(0) has three main subunits: a(1), b(2) and c(10-14). The alpha and beta chains form an alternating ring which encloses part of the gamma chain. F(1) is attached to F(0) by a central stalk formed by the gamma and epsilon chains, while a peripheral stalk is formed by the delta and b chains.

The protein resides in the cell membrane. Its function is as follows. F(1)F(0) ATP synthase produces ATP from ADP in the presence of a proton or sodium gradient. F-type ATPases consist of two structural domains, F(1) containing the extramembraneous catalytic core and F(0) containing the membrane proton channel, linked together by a central stalk and a peripheral stalk. During catalysis, ATP synthesis in the catalytic domain of F(1) is coupled via a rotary mechanism of the central stalk subunits to proton translocation. In terms of biological role, key component of the F(0) channel; it plays a direct role in translocation across the membrane. A homomeric c-ring of between 10-14 subunits forms the central stalk rotor element with the F(1) delta and epsilon subunits. This is ATP synthase subunit c from Bifidobacterium longum (strain DJO10A).